The primary structure comprises 400 residues: MAP kinase-activated protein kinase 2 (400 aa).

Residues Met1–Phe43 form a disordered region. Position 9 is a phosphoserine (Ser9). The span at Pro10–Gln42 shows a compositional bias: pro residues. A Phosphothreonine modification is found at Thr25. In terms of domain architecture, Protein kinase spans Lys64–Ile325. ATP contacts are provided by residues Leu70–Val78 and Lys93. A staurosporine-binding site is contributed by Glu139–Leu141. Asp186 functions as the Proton acceptor in the catalytic mechanism. Position 222 is a phosphothreonine; by MAPK14 (Thr222). Position 272 is a phosphoserine; by MAPK14 (Ser272). At Ser328 the chain carries Phosphoserine; by autocatalysis. Residues Ser328–Arg364 are autoinhibitory helix. Thr334 is subject to Phosphothreonine; by MAPK14. Residue Lys353 forms a Glycyl lysine isopeptide (Lys-Gly) (interchain with G-Cter in SUMO) linkage. The Nuclear export signal (NES) motif lies at Met356 to Val365. The interval Asp366 to Ala390 is p38 MAPK-binding site. 2 consecutive short sequence motifs (bipartite nuclear localization signal) follow at residues Lys371 to Lys374 and Lys385 to Lys389.

This sequence belongs to the protein kinase superfamily. CAMK Ser/Thr protein kinase family. In terms of assembly, heterodimer with p38-alpha/MAPK14; this heterodimer forms a stable complex: molecules are positioned 'face to face' so that the ATP-binding sites of both kinases are at the heterodimer interface. Interacts with PHC2. Interacts with HSF1. Sumoylation inhibits the protein kinase activity. Post-translationally, phosphorylated and activated by MAP kinase p38-alpha/MAPK14 at Thr-222, Ser-272 and Thr-334. In terms of tissue distribution, expressed in all tissues examined.

The protein localises to the cytoplasm. The protein resides in the nucleus. It carries out the reaction L-seryl-[protein] + ATP = O-phospho-L-seryl-[protein] + ADP + H(+). It catalyses the reaction L-threonyl-[protein] + ATP = O-phospho-L-threonyl-[protein] + ADP + H(+). Its activity is regulated as follows. Activated following phosphorylation by p38-alpha/MAPK14 following various stresses. Inhibited following sumoylation. Specifically inhibited by pyrrolopyridine inhibitors. In terms of biological role, stress-activated serine/threonine-protein kinase involved in cytokine production, endocytosis, reorganization of the cytoskeleton, cell migration, cell cycle control, chromatin remodeling, DNA damage response and transcriptional regulation. Following stress, it is phosphorylated and activated by MAP kinase p38-alpha/MAPK14, leading to phosphorylation of substrates. Phosphorylates serine in the peptide sequence, Hyd-X-R-X(2)-S, where Hyd is a large hydrophobic residue. Phosphorylates ALOX5, CDC25B, CDC25C, CEP131, ELAVL1, HNRNPA0, HSP27/HSPB1, KRT18, KRT20, LIMK1, LSP1, PABPC1, PARN, PDE4A, RCSD1, RPS6KA3, TAB3 and TTP/ZFP36. Phosphorylates HSF1; leading to the interaction with HSP90 proteins and inhibiting HSF1 homotrimerization, DNA-binding and transactivation activities. Mediates phosphorylation of HSP27/HSPB1 in response to stress, leading to the dissociation of HSP27/HSPB1 from large small heat-shock protein (sHsps) oligomers and impairment of their chaperone activities and ability to protect against oxidative stress effectively. Involved in inflammatory response by regulating tumor necrosis factor (TNF) and IL6 production post-transcriptionally: acts by phosphorylating AU-rich elements (AREs)-binding proteins ELAVL1, HNRNPA0, PABPC1 and TTP/ZFP36, leading to the regulation of the stability and translation of TNF and IL6 mRNAs. Phosphorylation of TTP/ZFP36, a major post-transcriptional regulator of TNF, promotes its binding to 14-3-3 proteins and reduces its ARE mRNA affinity, leading to inhibition of dependent degradation of ARE-containing transcripts. Phosphorylates CEP131 in response to cellular stress induced by ultraviolet irradiation which promotes binding of CEP131 to 14-3-3 proteins and inhibits formation of novel centriolar satellites. Also involved in late G2/M checkpoint following DNA damage through a process of post-transcriptional mRNA stabilization: following DNA damage, relocalizes from nucleus to cytoplasm and phosphorylates HNRNPA0 and PARN, leading to stabilization of GADD45A mRNA. Involved in toll-like receptor signaling pathway (TLR) in dendritic cells: required for acute TLR-induced macropinocytosis by phosphorylating and activating RPS6KA3. The chain is MAP kinase-activated protein kinase 2 (MAPKAPK2) from Homo sapiens (Human).